The sequence spans 37 residues: Large ribosomal subunit protein bL36 (37 aa).

This sequence belongs to the bacterial ribosomal protein bL36 family.

The protein is Large ribosomal subunit protein bL36 of Prochlorococcus marinus (strain MIT 9313).